The chain runs to 293 residues: Deubiquitinase OTUD6B (293 aa).

Disordered stretches follow at residues 1–43 (MEEV…RRKQ) and 57–114 (QKHE…LEKE). Residues 147–284 (LQIKEISSDG…GEHYNSVEPL (138 aa)) enclose the OTU domain. The segment at 152 to 158 (ISSDGHC) is cys-loop. D155 is an active-site residue. Residue C158 is the Nucleophile of the active site. The variable-loop stretch occupies residues 219–229 (VADTAAWGGQL). Residues 267–277 (YMRHAYGLGEH) are his-loop. H277 is an active-site residue.

The enzyme catalyses Thiol-dependent hydrolysis of ester, thioester, amide, peptide and isopeptide bonds formed by the C-terminal Gly of ubiquitin (a 76-residue protein attached to proteins as an intracellular targeting signal).. Deubiquitinating enzyme that may play a role in the ubiquitin-dependent regulation of different cellular processes. In Danio rerio (Zebrafish), this protein is Deubiquitinase OTUD6B (otud6b).